Here is a 177-residue protein sequence, read N- to C-terminus: Interleukin-1 receptor antagonist protein (177 aa).

Positions 1 to 25 (MEIRRRSVRHLISLLLFLFYSETAC) are cleaved as a signal peptide. The cysteines at positions 91 and 141 are disulfide-linked. A glycan (N-linked (GlcNAc...) asparagine) is linked at asparagine 109.

It belongs to the IL-1 family.

The protein localises to the secreted. Anti-inflammatory antagonist of interleukin-1 family of proinflammatory cytokines such as interleukin-1beta/IL1B and interleukin-1alpha/IL1A. Protects from immune dysregulation and uncontrolled systemic inflammation triggered by IL1 for a range of innate stimulatory agents such as pathogens. The polypeptide is Interleukin-1 receptor antagonist protein (IL1RN) (Equus caballus (Horse)).